The following is a 354-amino-acid chain: Protein sex-lethal (354 aa).

The tract at residues 1–20 (MYGNNNPGSNNNNGGYPPYG) is disordered. RRM domains lie at 127-205 (TNLI…YARP) and 213-293 (TNLY…LAQE).

As to quaternary structure, part of a complex containing fl(2)d, Sxl and vir. Interacts with nito. Interacts with Unr; cooperates with Sxl to prevent translation of msl-2 transcripts. Interacts with how; promoting nuclear retention of msl-2 transcripts. As to expression, the embryo-specific isoform is not expressed in the pole cells, which are the progenitors of the germline.

Its subcellular location is the nucleus. The protein resides in the cytoplasm. Its function is as follows. Sex determination switch protein, which controls sexual development and dosage compensation in females. Sxl protein is only active in females: it is inactive in males throughout development. Acts as a mRNA-binding protein, which specifically binds to a subset of pre-mRNAs and mRNAs and regulates their processing and/or translation. Promotes sexual development by controlling the female-specific alternative splicing of the transformer (tra) pre-mRNA: binds tightly to a characteristic uridine-rich polypyrimidine tract at the non-sex specific 3' splice site in one of the tra introns, preventing the general splicing factor U2AF from binding to this site and forcing it to bind to the female-specific 3' splice site. Acts as an inhibitor of dosage compensation in females by preventing production of msl-2 protein, an essential component of the MSL complex, the complex that mediates X-chromosome dosage compensation. Specifially binds to uridine stretches in both the 5'- and 3'-UTR of msl-2 transcripts. Sxl first acts at the splicing level by promoting retention of an intron in the 5' UTR of msl-2 pre-mRNA. The retained intron contains Sxl-binding sites that are required for subsequent steps of repression: after msl-2 mRNA export into the cytoplasm, Sxl coordinates its translational repression by targeting early steps of translation initiation. Together with how, Sxl also prevents production of msl-2 protein by preventing nuclear export of msl-2 transcripts. The sequence is that of Protein sex-lethal from Drosophila subobscura (Fruit fly).